The sequence spans 497 residues: Histone-lysine N-methyltransferase ASHR3 (497 aa).

Residues 118 to 186 (MVDCLVCHKP…QWRCVKCPMA (69 aa)) form a PHD-type zinc finger. One can recognise an AWS domain in the interval 283 to 326 (DGVGCTNCGPNCDRSCVCRVQCISCSKGCSCPESCGNRPFRKEK). The 118-residue stretch at 326-443 (KKIKIVKTEH…AGEPLTYDYR (118 aa)) folds into the SET domain. The region spanning 449–465 (PEVKCNCGSENCQGYLG) is the Post-SET domain.

This sequence belongs to the class V-like SAM-binding methyltransferase superfamily. Histone-lysine methyltransferase family. SET2 subfamily. As to quaternary structure, interacts with AMS/bHLH21 by its SET domain and PHD finger. In terms of tissue distribution, expressed in roots, flowers and buds, the anther and in stamen filaments.

Its subcellular location is the nucleus. It is found in the chromosome. The enzyme catalyses L-lysyl-[histone] + S-adenosyl-L-methionine = N(6)-methyl-L-lysyl-[histone] + S-adenosyl-L-homocysteine + H(+). Histone methyltransferase. Involved in stamen development. The chain is Histone-lysine N-methyltransferase ASHR3 (ASHR3) from Arabidopsis thaliana (Mouse-ear cress).